A 303-amino-acid polypeptide reads, in one-letter code: Ribonucleoside-diphosphate reductase small subunit (303 aa).

Fe cation contacts are provided by D60, E90, and H93. Y97 is an active-site residue. Residues 147-167 (LLMILIEGIFFASSFASISYL) form a helical membrane-spanning segment. Fe cation-binding residues include E153, E187, and H190.

The protein belongs to the ribonucleoside diphosphate reductase small chain family. In terms of assembly, heterotetramer composed of a homodimer of the large subunit (R1) and a homodimer of the small subunit (R2). Larger multisubunit protein complex are also active, composed of (R1)n(R2)n. It depends on Fe cation as a cofactor.

It is found in the host membrane. The catalysed reaction is a 2'-deoxyribonucleoside 5'-diphosphate + [thioredoxin]-disulfide + H2O = a ribonucleoside 5'-diphosphate + [thioredoxin]-dithiol. Functionally, ribonucleoside-diphosphate reductase holoenzyme provides the precursors necessary for viral DNA synthesis. Allows virus growth in non-dividing cells, as well as reactivation from latency in infected hosts. Catalyzes the biosynthesis of deoxyribonucleotides from the corresponding ribonucleotides. In Suid herpesvirus 1 (strain Kaplan) (SuHV-1), this protein is Ribonucleoside-diphosphate reductase small subunit.